The following is a 183-amino-acid chain: Endoribonuclease YbeY (183 aa).

Histidine 142, histidine 146, and histidine 152 together coordinate Zn(2+).

It belongs to the endoribonuclease YbeY family. The cofactor is Zn(2+).

The protein resides in the cytoplasm. In terms of biological role, single strand-specific metallo-endoribonuclease involved in late-stage 70S ribosome quality control and in maturation of the 3' terminus of the 16S rRNA. The polypeptide is Endoribonuclease YbeY (Trichodesmium erythraeum (strain IMS101)).